Consider the following 165-residue polypeptide: Histone H1-like protein HC2 (165 aa).

Composition is skewed to basic residues over residues 1 to 50 (MLGV…KTVA) and 59 to 80 (PVAKKATAKKAPVRKVAAKKTV). Residues 1 to 80 (MLGVQKKRST…VRKVAAKKTV (80 aa)) form a disordered region.

Belongs to the histone H1/H5 family. HCT subfamily.

Might have a role in establishing the nucleoid structure of elementary bodies. The polypeptide is Histone H1-like protein HC2 (hctB) (Chlamydia trachomatis).